We begin with the raw amino-acid sequence, 139 residues long: ATP synthase epsilon chain (139 aa).

It belongs to the ATPase epsilon chain family. As to quaternary structure, F-type ATPases have 2 components, CF(1) - the catalytic core - and CF(0) - the membrane proton channel. CF(1) has five subunits: alpha(3), beta(3), gamma(1), delta(1), epsilon(1). CF(0) has three main subunits: a, b and c.

The protein localises to the cell inner membrane. In terms of biological role, produces ATP from ADP in the presence of a proton gradient across the membrane. The chain is ATP synthase epsilon chain from Actinobacillus pleuropneumoniae serotype 7 (strain AP76).